Reading from the N-terminus, the 1382-residue chain is DNA-directed RNA polymerase subunit beta' (1382 aa).

Positions 70, 72, 85, and 88 each coordinate Zn(2+). 3 residues coordinate Mg(2+): Asp460, Asp462, and Asp464. Zn(2+) contacts are provided by Cys808, Cys882, Cys889, and Cys892.

Belongs to the RNA polymerase beta' chain family. As to quaternary structure, the RNAP catalytic core consists of 2 alpha, 1 beta, 1 beta' and 1 omega subunit. When a sigma factor is associated with the core the holoenzyme is formed, which can initiate transcription. Mg(2+) is required as a cofactor. Requires Zn(2+) as cofactor.

It catalyses the reaction RNA(n) + a ribonucleoside 5'-triphosphate = RNA(n+1) + diphosphate. In terms of biological role, DNA-dependent RNA polymerase catalyzes the transcription of DNA into RNA using the four ribonucleoside triphosphates as substrates. The protein is DNA-directed RNA polymerase subunit beta' of Citrifermentans bemidjiense (strain ATCC BAA-1014 / DSM 16622 / JCM 12645 / Bem) (Geobacter bemidjiensis).